Consider the following 494-residue polypeptide: Glycerol kinase (494 aa).

Thr-13 contacts ADP. Thr-13, Thr-14, and Ser-15 together coordinate ATP. Thr-13 is a sn-glycerol 3-phosphate binding site. Arg-17 is a binding site for ADP. Sn-glycerol 3-phosphate contacts are provided by Arg-83, Glu-84, Tyr-135, and Asp-244. Glycerol-binding residues include Arg-83, Glu-84, Tyr-135, Asp-244, and Gln-245. Thr-266 and Gly-309 together coordinate ADP. Residues Thr-266, Gly-309, Gln-313, and Gly-410 each coordinate ATP. Residues Gly-410 and Asn-414 each coordinate ADP.

The protein belongs to the FGGY kinase family.

It carries out the reaction glycerol + ATP = sn-glycerol 3-phosphate + ADP + H(+). It participates in polyol metabolism; glycerol degradation via glycerol kinase pathway; sn-glycerol 3-phosphate from glycerol: step 1/1. Its activity is regulated as follows. Inhibited by fructose 1,6-bisphosphate (FBP). In terms of biological role, key enzyme in the regulation of glycerol uptake and metabolism. Catalyzes the phosphorylation of glycerol to yield sn-glycerol 3-phosphate. The sequence is that of Glycerol kinase from Shewanella baltica (strain OS195).